Reading from the N-terminus, the 179-residue chain is Replication restart protein DnaT (179 aa).

Positions 151-168 (SRSSNGGMPQRDINSVSE) are enriched in polar residues. A disordered region spans residues 151–179 (SRSSNGGMPQRDINSVSEPDNHIPPGFRG).

The protein belongs to the DnaT family. Homooligomerizes. Interacts with PriB. Component of the replication restart primosome. Primosome assembly occurs via a 'hand-off' mechanism. PriA binds to replication forks, subsequently PriB then DnaT bind; DnaT then displaces ssDNA to generate the helicase loading substrate.

Its function is as follows. Involved in the restart of stalled replication forks, which reloads the replicative helicase on sites other than the origin of replication. Can function in multiple replication restart pathways. Displaces ssDNA from a PriB-ssDNA complex. Probably forms a spiral filament on ssDNA. The chain is Replication restart protein DnaT from Salmonella arizonae (strain ATCC BAA-731 / CDC346-86 / RSK2980).